The following is a 516-amino-acid chain: uncharacterized protein (516 aa).

To H.influenzae HI_0521.

This is an uncharacterized protein from Escherichia coli (strain K12).